A 143-amino-acid chain; its full sequence is Interleukin-3 (143 aa).

Residues 1-23 (MSSFPILHLLLLLLGCQVPQAQG) form the signal peptide. An N-linked (GlcNAc...) asparagine glycan is attached at asparagine 79.

It belongs to the IL-3 family. As to quaternary structure, monomer.

The protein localises to the secreted. Granulocyte/macrophage colony-stimulating factors are cytokines that act in hematopoiesis by controlling the production, differentiation, and function of 2 related white cell populations of the blood, the granulocytes and the monocytes-macrophages. Its function is as follows. This CSF induces granulocytes, macrophages, mast cells, stem cells, erythroid cells, eosinophils and megakaryocytes. This is Interleukin-3 (IL3) from Canis lupus familiaris (Dog).